Consider the following 390-residue polypeptide: MRTLLITGPGGTGRTTVAAATALTAARQGTRTLVLGTDRDDTLGAALGVRTGPAPTSVEPGLTAWRPDAAQGFRDALAALQDRAASALDLLGAARLDPQELTPLPGADDLALLRALREAALAEAHDLLVVDLPPAPRALALLAAPEELRRALRRLLPPERQAARALRPVLGRLAGVPMPTEALYEAAARWDLELAAAESVLADRNTVVRLVAEPGPAGADAVRTTTLGLALRGLRTDLLVANRVLPEDTPADSWLSGPLAQQRKTLEEWRGAYDVRAVAHLGHDPRGTDDLAALAVPGVNPDASPVEWPVTDRLAEDGVLVWHIPLPGAVREELDLVRRGDELAVAAGPFRRTVPLPSALRRCTVDGAALRDGTLAVRFAPDPELWPRGR.

Belongs to the arsA ATPase family.

This is an uncharacterized protein from Streptomyces coelicolor (strain ATCC BAA-471 / A3(2) / M145).